The primary structure comprises 58 residues: Ikitoxin (58 aa).

Positions 3 to 58 (VPGNYPLDKDGNTYKCFLLGENEECLNVCKLHGVQYGYCYASKCWCEYLEDDKDSV) constitute an LCN-type CS-alpha/beta domain. Intrachain disulfides connect Cys-18–Cys-41, Cys-27–Cys-46, and Cys-31–Cys-48.

In terms of tissue distribution, expressed by the venom gland.

It is found in the secreted. In terms of biological role, beta toxins bind voltage-independently at site-4 of sodium channels (Nav) and shift the voltage of activation toward more negative potentials thereby affecting sodium channel activation and promoting spontaneous and repetitive firing. Does not produce effect when administered to blowfly and cabbage looper larvae. In mice, does not produce convulsions, tremors, increased ventilation nor death. This is Ikitoxin from Parabuthus transvaalicus (Transvaal thick-tailed scorpion).